The sequence spans 456 residues: Putative sodium-coupled neutral amino acid transporter 11 (456 aa).

The tract at residues 1 to 25 (MRAGPRRQHLLPPQDNRAAVGYQRQ) is disordered. A helical transmembrane segment spans residues 58–78 (FNVVNSIIGSGIIDFSLILLI). Asn-94 carries an N-linked (GlcNAc...) asparagine glycan. A run of 6 helical transmembrane segments spans residues 98–118 (GFPGYILLSVLQFLYPFIAMI), 143–163 (VFIGRHFIIGLSTVTFTLPLS), 171–191 (LGKVSLISTGLTTLILGIVMA), 206–226 (AWVFAKPNAIQAVGVMSFAFI), 252–272 (MSIVISVFICIFFATCGYLTF), and 291–313 (VTFGRFCYGVTVILTYPMECFVT). Asn-325 carries N-linked (GlcNAc...) asparagine glycosylation. 3 consecutive transmembrane segments (helical) span residues 329–349 (VFHIVVTVMVITVATLVSLLI), 351–371 (CLGIVLELNGVLCATPLIFII), and 390–410 (IMSYVMLPIGAAVMVFGFVMA).

Belongs to the amino acid/polyamine transporter 2 family.

It localises to the membrane. Its function is as follows. Putative sodium-dependent amino acid/proton antiporter. In Macaca fascicularis (Crab-eating macaque), this protein is Putative sodium-coupled neutral amino acid transporter 11 (SLC38A11).